The sequence spans 636 residues: Chaperone protein DnaK (636 aa).

Threonine 197 bears the Phosphothreonine; by autocatalysis mark. Positions 596 to 607 are enriched in low complexity; that stretch reads LYQQAQEQQQSG. Positions 596 to 636 are disordered; that stretch reads LYQQAQEQQQSGSSGGSSDEDVVEDAEIVDEEDEEKRDDNR. The span at 613-636 shows a compositional bias: acidic residues; the sequence is SDEDVVEDAEIVDEEDEEKRDDNR.

It belongs to the heat shock protein 70 family.

Acts as a chaperone. In Rubrobacter xylanophilus (strain DSM 9941 / JCM 11954 / NBRC 16129 / PRD-1), this protein is Chaperone protein DnaK.